Reading from the N-terminus, the 1406-residue chain is DNA-directed RNA polymerase subunit beta' (1406 aa).

4 residues coordinate Zn(2+): Cys-70, Cys-72, Cys-85, and Cys-88. Mg(2+) is bound by residues Asp-460, Asp-462, and Asp-464. Zn(2+) contacts are provided by Cys-814, Cys-888, Cys-895, and Cys-898.

Belongs to the RNA polymerase beta' chain family. As to quaternary structure, the RNAP catalytic core consists of 2 alpha, 1 beta, 1 beta' and 1 omega subunit. When a sigma factor is associated with the core the holoenzyme is formed, which can initiate transcription. Mg(2+) serves as cofactor. Requires Zn(2+) as cofactor.

It catalyses the reaction RNA(n) + a ribonucleoside 5'-triphosphate = RNA(n+1) + diphosphate. In terms of biological role, DNA-dependent RNA polymerase catalyzes the transcription of DNA into RNA using the four ribonucleoside triphosphates as substrates. This is DNA-directed RNA polymerase subunit beta' from Yersinia pseudotuberculosis serotype O:1b (strain IP 31758).